The sequence spans 400 residues: Nicotinate phosphoribosyltransferase (400 aa).

The residue at position 220 (H220) is a Phosphohistidine; by autocatalysis.

It belongs to the NAPRTase family. Transiently phosphorylated on a His residue during the reaction cycle. Phosphorylation strongly increases the affinity for substrates and increases the rate of nicotinate D-ribonucleotide production. Dephosphorylation regenerates the low-affinity form of the enzyme, leading to product release.

It catalyses the reaction nicotinate + 5-phospho-alpha-D-ribose 1-diphosphate + ATP + H2O = nicotinate beta-D-ribonucleotide + ADP + phosphate + diphosphate. It participates in cofactor biosynthesis; NAD(+) biosynthesis; nicotinate D-ribonucleotide from nicotinate: step 1/1. Functionally, catalyzes the synthesis of beta-nicotinate D-ribonucleotide from nicotinate and 5-phospho-D-ribose 1-phosphate at the expense of ATP. The sequence is that of Nicotinate phosphoribosyltransferase from Shigella boydii serotype 18 (strain CDC 3083-94 / BS512).